The sequence spans 703 residues: DNA ligase (703 aa).

Residues 54–58, 103–104, and Glu132 each bind NAD(+); these read DAEYD and SL. Residue Lys134 is the N6-AMP-lysine intermediate of the active site. The NAD(+) site is built by Arg155, Glu192, Lys308, and Lys332. Positions 426, 429, 444, and 450 each coordinate Zn(2+). In terms of domain architecture, BRCT spans 608 to 698; that stretch reads EGPGPLDGVV…ADAARALAVP (91 aa).

The protein belongs to the NAD-dependent DNA ligase family. LigA subfamily. It depends on Mg(2+) as a cofactor. Requires Mn(2+) as cofactor.

It carries out the reaction NAD(+) + (deoxyribonucleotide)n-3'-hydroxyl + 5'-phospho-(deoxyribonucleotide)m = (deoxyribonucleotide)n+m + AMP + beta-nicotinamide D-nucleotide.. Its function is as follows. DNA ligase that catalyzes the formation of phosphodiester linkages between 5'-phosphoryl and 3'-hydroxyl groups in double-stranded DNA using NAD as a coenzyme and as the energy source for the reaction. It is essential for DNA replication and repair of damaged DNA. This is DNA ligase from Parafrankia sp. (strain EAN1pec).